A 284-amino-acid chain; its full sequence is Cysteine-rich repeat secretory protein 8 (284 aa).

The N-terminal stretch at 1 to 27 (MATFIRFTAPLFCFFFLFSLFSHQTMS) is a signal peptide. 2 consecutive Gnk2-homologous domains span residues 32-136 (MATF…NVSF) and 151-259 (SLAT…TTGL).

The protein belongs to the cysteine-rich repeat secretory protein family.

It is found in the secreted. The sequence is that of Cysteine-rich repeat secretory protein 8 (CRRSP8) from Arabidopsis thaliana (Mouse-ear cress).